A 205-amino-acid chain; its full sequence is High frequency lysogenization protein HflD homolog (205 aa).

It belongs to the HflD family.

Its subcellular location is the cytoplasm. It localises to the cell inner membrane. This chain is High frequency lysogenization protein HflD homolog, found in Shewanella halifaxensis (strain HAW-EB4).